Consider the following 238-residue polypeptide: Chloride intracellular channel exl-1 (238 aa).

This sequence belongs to the chloride channel CLIC family. As to expression, expressed in the intestine, neurons and muscles.

The protein resides in the cytoplasm. The protein localises to the membrane. It localises to the lysosome membrane. Its subcellular location is the golgi apparatus membrane. Its function is as follows. Probable chloride channel. The sequence is that of Chloride intracellular channel exl-1 (exl-1) from Caenorhabditis elegans.